The following is a 138-amino-acid chain: Small ribosomal subunit protein uS11c (138 aa).

Belongs to the universal ribosomal protein uS11 family. As to quaternary structure, part of the 30S ribosomal subunit.

The protein localises to the plastid. This is Small ribosomal subunit protein uS11c from Cuscuta gronovii (Common dodder).